The sequence spans 148 residues: Glutamyl-tRNA(Gln) amidotransferase subunit C, mitochondrial (148 aa).

The protein belongs to the GatC family. In terms of assembly, subunit of the heterotrimeric GatCAB amidotransferase (AdT) complex, composed of A, B and C subunits.

The protein localises to the mitochondrion. It carries out the reaction L-glutamyl-tRNA(Gln) + L-glutamine + ATP + H2O = L-glutaminyl-tRNA(Gln) + L-glutamate + ADP + phosphate + H(+). Allows the formation of correctly charged Gln-tRNA(Gln) through the transamidation of misacylated Glu-tRNA(Gln) in the mitochondria. The reaction takes place in the presence of glutamine and ATP through an activated gamma-phospho-Glu-tRNA(Gln). In Drosophila pseudoobscura pseudoobscura (Fruit fly), this protein is Glutamyl-tRNA(Gln) amidotransferase subunit C, mitochondrial.